The sequence spans 340 residues: UDP-glucose 4-epimerase (340 aa).

NAD(+) is bound by residues 16-17 (YI), 37-42 (IDNNKN), 60-61 (DL), 82-86 (FAAKT), Ser-127, Tyr-154, Lys-158, and Phe-182. Positions 127 and 154 each coordinate substrate. Catalysis depends on Tyr-154, which acts as the Proton acceptor. Substrate is bound by residues Asn-183, 199-200 (TL), 216-218 (FLY), Arg-231, and 295-298 (RSWD).

The protein belongs to the NAD(P)-dependent epimerase/dehydratase family. In terms of assembly, homodimer. NAD(+) is required as a cofactor.

The enzyme catalyses UDP-alpha-D-glucose = UDP-alpha-D-galactose. It functions in the pathway carbohydrate metabolism; galactose metabolism. Functionally, involved in the metabolism of galactose. Catalyzes the conversion of UDP-galactose (UDP-Gal) to UDP-glucose (UDP-Glc) through a mechanism involving the transient reduction of NAD. This Mycoplasma genitalium (strain ATCC 33530 / DSM 19775 / NCTC 10195 / G37) (Mycoplasmoides genitalium) protein is UDP-glucose 4-epimerase (galE).